A 567-amino-acid polypeptide reads, in one-letter code: Oxygen-dependent choline dehydrogenase (567 aa).

FAD is bound at residue 4-33 (DYIIIGAGSAGNVLAARLTEDADVTVLLLE). Histidine 473 serves as the catalytic Proton acceptor.

The protein belongs to the GMC oxidoreductase family. It depends on FAD as a cofactor.

It catalyses the reaction choline + A = betaine aldehyde + AH2. The enzyme catalyses betaine aldehyde + NAD(+) + H2O = glycine betaine + NADH + 2 H(+). Its pathway is amine and polyamine biosynthesis; betaine biosynthesis via choline pathway; betaine aldehyde from choline (cytochrome c reductase route): step 1/1. Its function is as follows. Involved in the biosynthesis of the osmoprotectant glycine betaine. Catalyzes the oxidation of choline to betaine aldehyde and betaine aldehyde to glycine betaine at the same rate. This is Oxygen-dependent choline dehydrogenase from Yersinia pseudotuberculosis serotype O:1b (strain IP 31758).